The chain runs to 202 residues: Peptide deformylase 2 (202 aa).

Fe cation contacts are provided by Cys120 and His162. Glu163 is a catalytic residue. His166 is a binding site for Fe cation.

Belongs to the polypeptide deformylase family. The cofactor is Fe(2+).

The catalysed reaction is N-terminal N-formyl-L-methionyl-[peptide] + H2O = N-terminal L-methionyl-[peptide] + formate. Its function is as follows. Removes the formyl group from the N-terminal Met of newly synthesized proteins. Requires at least a dipeptide for an efficient rate of reaction. N-terminal L-methionine is a prerequisite for activity but the enzyme has broad specificity at other positions. The polypeptide is Peptide deformylase 2 (Rickettsia conorii (strain ATCC VR-613 / Malish 7)).